A 99-amino-acid chain; its full sequence is Small ribosomal subunit protein bS21 (99 aa).

A disordered region spans residues 60-99 (KKLQREGLLPMKPKPVFGAGPGGDRRGPGAGPGAGPRPAR).

The protein belongs to the bacterial ribosomal protein bS21 family.

The protein is Small ribosomal subunit protein bS21 of Rhodopseudomonas palustris (strain BisA53).